The following is a 212-amino-acid chain: Adenylate kinase (212 aa).

An ATP-binding site is contributed by 10 to 15; the sequence is GAGKGT. Residues 30-59 form an NMP region; sequence STGDMFRAAMANQTEMGRLAKSYIDKGELV. AMP contacts are provided by residues Thr31, Arg36, 57–59, 86–89, and Gln93; these read ELV and GYPR. The LID stretch occupies residues 127-159; it reads GRIINRKTGETFHKVFNPPVDYKEEDYYQREDD. Residues Arg128 and 137-138 each bind ATP; that span reads TF. Residues Arg156 and Arg167 each coordinate AMP. Gln195 serves as a coordination point for ATP.

This sequence belongs to the adenylate kinase family. Monomer.

It localises to the cytoplasm. It catalyses the reaction AMP + ATP = 2 ADP. The protein operates within purine metabolism; AMP biosynthesis via salvage pathway; AMP from ADP: step 1/1. Functionally, catalyzes the reversible transfer of the terminal phosphate group between ATP and AMP. Plays an important role in cellular energy homeostasis and in adenine nucleotide metabolism. This chain is Adenylate kinase, found in Streptococcus pyogenes serotype M3 (strain ATCC BAA-595 / MGAS315).